Consider the following 353-residue polypeptide: WAT1-related protein At3g28100 (353 aa).

A run of 10 helical transmembrane segments spans residues 12–32 (AVFL…STLF), 43–63 (YAFL…SLFF), 81–101 (IGLL…GIEY), 105–125 (TLAS…AIIF), 137–157 (SVAK…VVLY), 187–207 (WLIG…SFIL), 219–239 (FTVS…IGLV), 252–272 (FDIT…YYVI), 283–303 (LYLA…SAVF), and 308–328 (LYLG…AVMW). The 129-residue stretch at 27-155 (GISTLFKVAT…LSLIGALVVV (129 aa)) folds into the EamA domain.

The protein belongs to the drug/metabolite transporter (DMT) superfamily. Plant drug/metabolite exporter (P-DME) (TC 2.A.7.4) family.

The protein resides in the membrane. This Arabidopsis thaliana (Mouse-ear cress) protein is WAT1-related protein At3g28100.